The primary structure comprises 328 residues: Phenylalanine--tRNA ligase alpha subunit (328 aa).

Glu-245 contacts Mg(2+).

Belongs to the class-II aminoacyl-tRNA synthetase family. Phe-tRNA synthetase alpha subunit type 1 subfamily. Tetramer of two alpha and two beta subunits. The cofactor is Mg(2+).

The protein resides in the cytoplasm. It catalyses the reaction tRNA(Phe) + L-phenylalanine + ATP = L-phenylalanyl-tRNA(Phe) + AMP + diphosphate + H(+). In Helicobacter pylori (strain Shi470), this protein is Phenylalanine--tRNA ligase alpha subunit.